Consider the following 493-residue polypeptide: Cytochrome P450 Tp9025 (493 aa).

The chain crosses the membrane as a helical; Signal-anchor for type II membrane protein span at residues 1–21 (MALYIIFLLIASSFILFSFIF). N-linked (GlcNAc...) asparagine glycans are attached at residues N209 and N411. Residue C433 coordinates heme.

The protein belongs to the cytochrome P450 family. Heme serves as cofactor.

It is found in the membrane. It participates in secondary metabolite biosynthesis; terpenoid biosynthesis. Probably involved in the biosynthesis of germacrene-derived sesquiterpene lactones. This is Cytochrome P450 Tp9025 from Tanacetum parthenium (Feverfew).